We begin with the raw amino-acid sequence, 443 residues long: 26S proteasome regulatory subunit rpn501 (443 aa).

Serine 209 is modified (phosphoserine). The 173-residue stretch at 230 to 402 folds into the PCI domain; it reads DVCKYYRAVY…QVISFKKSQN (173 aa).

The protein belongs to the proteasome subunit p55 family.

The protein localises to the nucleus. Its function is as follows. Acts as a regulatory subunit of the 26S proteasome which is involved in the ATP-dependent degradation of ubiquitinated proteins. Required for proper proteasome assembly. This Schizosaccharomyces pombe (strain 972 / ATCC 24843) (Fission yeast) protein is 26S proteasome regulatory subunit rpn501 (rpn501).